The primary structure comprises 166 residues: Apoptosis regulator M11L (166 aa).

A helical transmembrane segment spans residues 138–160 (SGGCKISVYLTAAVVGFVAYGIL).

As to quaternary structure, interacts with host BAX; this interaction inhibits apoptosis activation. Interacts with host BAK1.

Its subcellular location is the host mitochondrion. It localises to the host membrane. Plays a role in the inhibition of mitochondria-mediated apoptosis by blocking the activation of mitochondria-tranlocalized BAX thereby maintaining pro-apoptotic BAX in an inactive conformation. Also inhibits apoptosis in a BAX-independent manner by interacting with and inhibiting host BAK1. The sequence is that of Apoptosis regulator M11L (m011L) from Myxoma virus (strain Lausanne) (MYXV).